Consider the following 290-residue polypeptide: Membrane protein insertase YidC 1 (290 aa).

The first 19 residues, 1–19 (MKKKALLPLFLGIMIFLAG), serve as a signal peptide directing secretion. Cys20 carries N-palmitoyl cysteine lipidation. Cys20 carries the S-diacylglycerol cysteine lipid modification. 5 helical membrane-spanning segments follow: residues 56 to 76 (FGLA…PFML), 134 to 154 (MLGC…YFVL), 176 to 196 (PDIW…VVSS), 211 to 231 (MVIS…ALGL), and 232 to 252 (YWSV…IYYS). The disordered stretch occupies residues 270–290 (HNPYSKKKGKNTQVVSKKNKK). Positions 280–290 (NTQVVSKKNKK) are enriched in polar residues.

It belongs to the OXA1/ALB3/YidC family. Type 2 subfamily.

The protein localises to the cell membrane. Required for the insertion and/or proper folding and/or complex formation of integral membrane proteins into the membrane. Involved in integration of membrane proteins that insert both dependently and independently of the Sec translocase complex, as well as at least some lipoproteins. The polypeptide is Membrane protein insertase YidC 1 (Staphylococcus epidermidis (strain ATCC 12228 / FDA PCI 1200)).